Here is a 230-residue protein sequence, read N- to C-terminus: N-(5'-phosphoribosyl)anthranilate isomerase (230 aa).

This sequence belongs to the TrpF family.

It catalyses the reaction N-(5-phospho-beta-D-ribosyl)anthranilate = 1-(2-carboxyphenylamino)-1-deoxy-D-ribulose 5-phosphate. It participates in amino-acid biosynthesis; L-tryptophan biosynthesis; L-tryptophan from chorismate: step 3/5. The chain is N-(5'-phosphoribosyl)anthranilate isomerase from Ralstonia nicotianae (strain ATCC BAA-1114 / GMI1000) (Ralstonia solanacearum).